The chain runs to 409 residues: Protein a6 (409 aa).

A Phosphoserine modification is found at Ser86. Residues 106 to 120 (RAHRTGRRQAPRRAA) are compositionally biased toward basic residues. Residues 106–165 (RAHRTGRRQAPRRAATHSYPVTDSILITSDDEHNEQEPSSTARVRSQLSMRSPPPLAPLT) form a disordered region. Thr133 is subject to Phosphothreonine. The residue at position 134 (Ser134) is a Phosphoserine. The segment covering 142-155 (EPSSTARVRSQLSM) has biased composition (polar residues).

The sequence is that of Protein a6 (a6) from Drosophila melanogaster (Fruit fly).